The chain runs to 126 residues: Small ribosomal subunit protein uS12c (126 aa).

This sequence belongs to the universal ribosomal protein uS12 family. Part of the 30S ribosomal subunit.

Its subcellular location is the plastid. The protein localises to the chloroplast. With S4 and S5 plays an important role in translational accuracy. Located at the interface of the 30S and 50S subunits. This is Small ribosomal subunit protein uS12c (rps12) from Trieres chinensis (Marine centric diatom).